The chain runs to 218 residues: Small ribosomal subunit protein uS3 (218 aa).

Positions 38-106 (IRKYIESKLA…RVHINIVEIK (69 aa)) constitute a KH type-2 domain.

Belongs to the universal ribosomal protein uS3 family. As to quaternary structure, part of the 30S ribosomal subunit. Forms a tight complex with proteins S10 and S14.

In terms of biological role, binds the lower part of the 30S subunit head. Binds mRNA in the 70S ribosome, positioning it for translation. This is Small ribosomal subunit protein uS3 from Ligilactobacillus salivarius (strain UCC118) (Lactobacillus salivarius).